We begin with the raw amino-acid sequence, 469 residues long: Lactonohydrolase oryH (469 aa).

The signal sequence occupies residues 1–20 (MYLSLRLVSLALCIAPLASA).

It belongs to the SMP-30/CGR1 family.

Its pathway is secondary metabolite biosynthesis. In terms of biological role, lactonohydrolase; part of the gene cluster that mediates the biosynthesis of oryzines, natural products with an unusual maleidride backbone. The two subunits of the fungal fatty acid synthase oryfasA and oryfasB probably form octenoic acid. This fatty acid is most likely activated by the acyl-CoA ligase oryP to give octenyl-CoA before the citrate synthase-like protein oryE catalyzes condensation with oxaloacetate to form tricarboxylic acid. The next steps of the pathways are conjectural, but a favorite possible route has been proposed, beginning with decarboxylation and concomitant dehydration by the decarboxylase oryM, followed by tautomerization, which may lead to the production of a diene intermediate. Reduction of this diene intermediate could give the known metabolite piliformic acid. On the pathway to oryzine B and oryzine A, however, hydroxylation of the diene by the alpha-ketoglutarate-dependent dioxygenase oryG and lactonisation by the lactonohydrolases oryH or oryL could give oryzine B directly. Finally, enoyl reduction by the dehydrogenase oryD would then convert oryzine B into oryzine A. In Aspergillus oryzae (strain ATCC 42149 / RIB 40) (Yellow koji mold), this protein is Lactonohydrolase oryH.